The chain runs to 758 residues: EMILIN-3 (758 aa).

A signal peptide spans 1-21 (MGRRLSVWLCTVAALLSGAQA). The region spanning 54-130 (HKSLCAYVVH…PGLTGESCPE (77 aa)) is the EMI domain. 3 disulfides stabilise this stretch: Cys58-Cys120, Cys85-Cys91, and Cys119-Cys128. Asn65 carries an N-linked (GlcNAc...) asparagine glycan. The interval 131–178 (HLTDHGATPPHQEPEPQIPLGQLGPGPRPSPYSREAPRPRGRKGQGPF) is disordered. A coiled-coil region spans residues 379-401 (SQLALISARVDSLERNLQAVTET). Asn436 carries an N-linked (GlcNAc...) asparagine glycan. Coiled-coil stretches lie at residues 460–483 (GSTLEQRVQSLEERLATLTGELSP) and 528–567 (AEVKAWQSRSEALLHQVARHTALLQQLNGTVAEVQGQLAE). Residues Asn555 and Asn609 are each glycosylated (N-linked (GlcNAc...) asparagine). 2 coiled-coil regions span residues 642-677 (RQVLNLRGELEQLKAGMANVARGLSRCRDTAQELQH) and 720-753 (HIDKLNHTLAQHTQDIARLRDDLLDCRAQLAEVR). Asn725 carries an N-linked (GlcNAc...) asparagine glycan.

It is found in the secreted. The protein resides in the extracellular space. Its subcellular location is the extracellular matrix. The protein localises to the cytoplasm. This is EMILIN-3 (Emilin3) from Mus musculus (Mouse).